Reading from the N-terminus, the 401-residue chain is MTERNIAIEAANRDAVEDQRVEIVERKGIGHPDSICDGIAETVSRALSQLYLDRVGHVLHYNTDETQLVAGESIPDFDGGEVVEPIYILIVGRATKKYNGQRLPVDSTAVSAARTYLRENIPALTLGTDVIVDVRLGQGSGDLKDVFGENNVEIPMANDTSFGVGHAPLTETEKIVQAVEMQLNGPYADNHPVIGPDIKVMGKRENNSIDITVAAAMIDRYVADLEDYADAIENIRAFVTDVAHRHTNREVTVAVNTADDYDTGSIYLTVTGTSAEMGDDGSVGRGNRANGLITPNRPMSMEATSGKNPVNHIGKIYNLLSTDIAESVVADVDGIRDLQIRLLSQIGRPIDEPHIADAKIVTESNVNLQAIEPEIRAIIDNRLADVTSITERVINDELTTF.

Residue 137–142 (GQGSGD) coordinates ATP.

It belongs to the AdoMet synthase 2 family. The cofactor is Mg(2+).

The catalysed reaction is L-methionine + ATP + H2O = S-adenosyl-L-methionine + phosphate + diphosphate. Its pathway is amino-acid biosynthesis; S-adenosyl-L-methionine biosynthesis; S-adenosyl-L-methionine from L-methionine: step 1/1. Its function is as follows. Catalyzes the formation of S-adenosylmethionine from methionine and ATP. This chain is S-adenosylmethionine synthase, found in Haloquadratum walsbyi (strain DSM 16790 / HBSQ001).